Consider the following 120-residue polypeptide: MIF-like protein mif-2 (120 aa).

This sequence belongs to the MIF family.

In Caenorhabditis elegans, this protein is MIF-like protein mif-2 (mif-2).